The sequence spans 494 residues: MKTIAFDSNKYLNLQRDHILERISQFDGKLYMEFGGKMLEDYHAARVLPGYEPDNKIKLLKELKEQVEIVIAINANNIEHSKARGDLGISYDQEVFRLIDKFNTLDIYVGSVVITQYNNQPAADAFRKQLEKNGIASYLHYPIKGYPTDINHIISSEGMGKNNYIKTSRNLIVVTAPGPGSGKLATCMSQMYHDQINGVKSGYAKFETFPVWNLPLHHPVNLAYEAATADLDDVNMIDPFHLETYGKTAVNYNRDIEVFPVLNRTFERILSKSPYASPTDMGVNMVGFSIVNEEAAIEASKQEIIRRYYQTLVDFKAERVTESAVKKIELLMNDIGVTPDDRHVTVAAHQKAEQTGQPALALQLPNGQIVTGKTSELFGPTAAVIINAIKTLAKIDKTTHLIEPEYVKPIQGLKVNHLGSHNPRLHSNEILIALAITAMTSEEANLAMKELGNLKGSEAHSTVILTEEDKNVLRKLGVNITFDPVYQHHKLYRK.

This sequence belongs to the UPF0371 family.

The polypeptide is UPF0371 protein SPy_1343/M5005_Spy1095 (Streptococcus pyogenes serotype M1).